A 509-amino-acid chain; its full sequence is Ribonuclease Y (509 aa).

A helical membrane pass occupies residues 5-25; it reads IAGVSGIAGAAVGAGACYLWL. The 67-residue stretch at 199–265 folds into the KH domain; it reads LINLVNLPSD…TRVIEILIED (67 aa). The HD domain occupies 325–418; the sequence is ALAHTLEVAK…VCAADTLSAA (94 aa).

Belongs to the RNase Y family.

The protein localises to the cell membrane. In terms of biological role, endoribonuclease that initiates mRNA decay. In Sulfurovum sp. (strain NBC37-1), this protein is Ribonuclease Y.